Here is a 223-residue protein sequence, read N- to C-terminus: Endonuclease V (223 aa).

Mg(2+) is bound by residues aspartate 35 and aspartate 103.

This sequence belongs to the endonuclease V family. Mg(2+) serves as cofactor.

Its subcellular location is the cytoplasm. The enzyme catalyses Endonucleolytic cleavage at apurinic or apyrimidinic sites to products with a 5'-phosphate.. In terms of biological role, DNA repair enzyme involved in the repair of deaminated bases. Selectively cleaves double-stranded DNA at the second phosphodiester bond 3' to a deoxyinosine leaving behind the intact lesion on the nicked DNA. This chain is Endonuclease V, found in Klebsiella pneumoniae subsp. pneumoniae (strain ATCC 700721 / MGH 78578).